A 290-amino-acid chain; its full sequence is Porphobilinogen deaminase (290 aa).

Position 238 is an S-(dipyrrolylmethanemethyl)cysteine (C238).

The protein belongs to the HMBS family. In terms of assembly, monomer. Requires dipyrromethane as cofactor.

The catalysed reaction is 4 porphobilinogen + H2O = hydroxymethylbilane + 4 NH4(+). The protein operates within porphyrin-containing compound metabolism; protoporphyrin-IX biosynthesis; coproporphyrinogen-III from 5-aminolevulinate: step 2/4. Tetrapolymerization of the monopyrrole PBG into the hydroxymethylbilane pre-uroporphyrinogen in several discrete steps. The chain is Porphobilinogen deaminase from Clostridium botulinum (strain Eklund 17B / Type B).